A 769-amino-acid polypeptide reads, in one-letter code: Serine protease HtrA-like (769 aa).

Basic residues predominate over residues 1–20 (MDIGKKHVIPKSQYRRKRRE). The segment at 1-390 (MDIGKKHVIP…ATSKLNKGRA (390 aa)) is disordered. 2 stretches are compositionally biased toward basic and acidic residues: residues 21 to 64 (FFHN…ERFK) and 71 to 108 (LEQR…DVSK). Positions 126-137 (YEQNSEATLSTK) are enriched in polar residues. Positions 138-186 (STDKVESTEMRKLSSDKNKVGHEEQHVLSKPSEHDKETRIDSESSRTDS) are enriched in basic and acidic residues. Polar residues predominate over residues 247 to 262 (QQSQNEQTKTYTYGDS). Basic and acidic residues-rich tracts occupy residues 264–296 (QNDK…HIVD) and 310–330 (KTDD…HKQN). Residues 331 to 347 (ADSSETVGYQSQSTASH) are compositionally biased toward polar residues. Basic and acidic residues predominate over residues 348–364 (RSTEKRNISINDHDKLN). Positions 365–390 (GQKTNTKTSANNNQKKATSKLNKGRA) are enriched in polar residues. The helical transmembrane segment at 410-430 (LVILMGIIILIVILNAIFNNV) threads the bilayer. Active-site charge relay system residues include His-504, Asp-534, and Ser-619. Residues 680-733 (IVSLNSFERQAVKLPGKVKNGVVVDQVDNNGLADQSGLKKGDVITELDGKLLED) form the PDZ domain.

Belongs to the peptidase S1C family.

Its subcellular location is the cell membrane. The chain is Serine protease HtrA-like from Staphylococcus aureus (strain NCTC 8325 / PS 47).